The primary structure comprises 108 residues: Peptidyl-prolyl cis-trans isomerase FKBP1B (108 aa).

Residues 20–108 (GQTCVVHYTG…IFDVELLNLE (89 aa)) form the PPIase FKBP-type domain.

As to quaternary structure, identified in a complex composed of RYR2, FKBP1B, PKA catalytic subunit, PRKAR2A, AKAP6, and the protein phosphatases PP2A and PP1. Interacts directly with RYR2.

The protein localises to the cytoplasm. The protein resides in the sarcoplasmic reticulum. It carries out the reaction [protein]-peptidylproline (omega=180) = [protein]-peptidylproline (omega=0). Inhibited by both FK506 and rapamycin. Its function is as follows. Has the potential to contribute to the immunosuppressive and toxic effects of FK506 and rapamycin. PPIases accelerate the folding of proteins. It catalyzes the cis-trans isomerization of proline imidic peptide bonds in oligopeptides. This is Peptidyl-prolyl cis-trans isomerase FKBP1B (FKBP1B) from Bos taurus (Bovine).